Reading from the N-terminus, the 623-residue chain is Kelch repeat and BTB domain-containing protein 2 (623 aa).

A BTB domain is found at 31-98 (TDIVLIVEGT…AYTGNLAMND (68 aa)). The 97-residue stretch at 133–229 (CVRLLSFADL…IRIDALSEVT (97 aa)) folds into the BACK domain. Position 300 is a phosphoserine (S300). Kelch repeat units follow at residues 317–380 (DIYI…CCEG), 381–429 (YIYA…VVHD), 431–469 (IYVM…AFGD), 470–529 (KIFY…RAVV), and 535–581 (CVFM…DFRC).

As to quaternary structure, component of the BCR(KBTBD2) E3 ubiquitin ligase complex, at least composed of CUL3, KBTBD2 and RBX1. Interacts (via the BTB domain) with CUL3.

It participates in protein modification; protein ubiquitination. Its function is as follows. Substrate-specific adapter of a BCR (BTB-CUL3-RBX1) E3 ubiquitin ligase complex that acts as a regulator of the insulin signaling pathway, modulating insulin sensitivity by limiting PIK3R1/p85alpha abundance in adipocytes. Targets PIK3R1, the regulatory subunit of phosphatidylinositol 3-kinase (PI3K), for 'Lys-48'-linked polyubiquitination and proteasome-mediated degradation. The sequence is that of Kelch repeat and BTB domain-containing protein 2 from Homo sapiens (Human).